The chain runs to 185 residues: Transcriptional repressor NrdR (185 aa).

The segment at 1-24 (MRCPFCGGPDTQVKDSRPSEDSSA) is disordered. A zinc finger lies at 3 to 34 (CPFCGGPDTQVKDSRPSEDSSAIRRRRVCPDC). Over residues 12 to 24 (QVKDSRPSEDSSA) the composition is skewed to basic and acidic residues. The ATP-cone domain maps to 49 to 139 (LVVLKRSGKR…VYKNFREAQD (91 aa)). Positions 148 to 185 (GERLDGEGDLPEQGDAVPAPPDEAVAAPRRGRPARKRA) are disordered. The segment covering 176–185 (RRGRPARKRA) has biased composition (basic residues).

It belongs to the NrdR family. Zn(2+) is required as a cofactor.

Its function is as follows. Negatively regulates transcription of bacterial ribonucleotide reductase nrd genes and operons by binding to NrdR-boxes. This is Transcriptional repressor NrdR from Methylorubrum extorquens (strain CM4 / NCIMB 13688) (Methylobacterium extorquens).